We begin with the raw amino-acid sequence, 305 residues long: HPr kinase/phosphorylase (305 aa).

Residues His138 and Lys159 contribute to the active site. An ATP-binding site is contributed by 153 to 160 (GESGIGKS). Position 160 (Ser160) interacts with Mg(2+). The active-site Proton acceptor; for phosphorylation activity. Proton donor; for dephosphorylation activity is Asp177. The tract at residues 201–210 (IEIRGIGILD) is important for the catalytic mechanism of both phosphorylation and dephosphorylation. Glu202 serves as a coordination point for Mg(2+). Arg243 is a catalytic residue. Residues 264–269 (PVRPGR) are important for the catalytic mechanism of dephosphorylation.

The protein belongs to the HPrK/P family. As to quaternary structure, homohexamer. Mg(2+) serves as cofactor.

It catalyses the reaction [HPr protein]-L-serine + ATP = [HPr protein]-O-phospho-L-serine + ADP + H(+). The catalysed reaction is [HPr protein]-O-phospho-L-serine + phosphate + H(+) = [HPr protein]-L-serine + diphosphate. Functionally, catalyzes the ATP- as well as the pyrophosphate-dependent phosphorylation of a specific serine residue in HPr, a phosphocarrier protein of the phosphoenolpyruvate-dependent sugar phosphotransferase system (PTS). HprK/P also catalyzes the pyrophosphate-producing, inorganic phosphate-dependent dephosphorylation (phosphorolysis) of seryl-phosphorylated HPr (P-Ser-HPr). The two antagonistic activities of HprK/P are regulated by several intracellular metabolites, which change their concentration in response to the absence or presence of rapidly metabolisable carbon sources (glucose, fructose, etc.) in the growth medium. Therefore, by controlling the phosphorylation state of HPr, HPrK/P is a sensor enzyme that plays a major role in the regulation of carbon metabolism and sugar transport: it mediates carbon catabolite repression (CCR), and regulates PTS-catalyzed carbohydrate uptake and inducer exclusion. This Caldanaerobacter subterraneus subsp. tengcongensis (strain DSM 15242 / JCM 11007 / NBRC 100824 / MB4) (Thermoanaerobacter tengcongensis) protein is HPr kinase/phosphorylase.